Consider the following 246-residue polypeptide: UDP-N-acetyl-D-mannosaminuronic acid transferase (246 aa).

The protein belongs to the glycosyltransferase 26 family.

The catalysed reaction is UDP-N-acetyl-alpha-D-mannosaminouronate + N-acetyl-alpha-D-glucosaminyl-di-trans,octa-cis-undecaprenyl diphosphate = beta-D-ManNAcA-(1-&gt;4)-alpha-D-GlcNAc-di-trans,octa-cis-undecaprenyl diphosphate + UDP + H(+). The protein operates within bacterial outer membrane biogenesis; enterobacterial common antigen biosynthesis. Functionally, catalyzes the synthesis of Und-PP-GlcNAc-ManNAcA (Lipid II), the second lipid-linked intermediate involved in enterobacterial common antigen (ECA) synthesis. The chain is UDP-N-acetyl-D-mannosaminuronic acid transferase from Escherichia coli O7:K1 (strain IAI39 / ExPEC).